Reading from the N-terminus, the 520-residue chain is Ubiquitin carboxyl-terminal hydrolase 3 (520 aa).

An N-acetylmethionine modification is found at methionine 1. Residues 1–121 form a UBP-type zinc finger; the sequence is MECPHLSSSV…QKVREHLQNL (121 aa). Zn(2+) is bound by residues cysteine 3, histidine 5, cysteine 29, cysteine 32, cysteine 41, cysteine 44, cysteine 49, histidine 56, histidine 60, histidine 82, cysteine 95, and cysteine 98. The 353-residue stretch at 159–511 folds into the USP domain; sequence TGLRNLGNTC…KAYILFYVER (353 aa). Residue cysteine 168 is the Nucleophile of the active site. The Proton acceptor role is filled by histidine 471.

Belongs to the peptidase C19 family. USP3 subfamily. In terms of assembly, interacts (via UBP-type domain) with H2A; the interaction is less efficient than with monoubiquitinated H2A.

The protein resides in the nucleus. Its subcellular location is the cytoplasm. It carries out the reaction Thiol-dependent hydrolysis of ester, thioester, amide, peptide and isopeptide bonds formed by the C-terminal Gly of ubiquitin (a 76-residue protein attached to proteins as an intracellular targeting signal).. Deubiquitinase that plays a role in several cellular processes including transcriptional regulation, cell cycle progression or innate immunity. In response to DNA damage, deubiquitinates monoubiquitinated target proteins such as histone H2A and H2AX and thereby counteracts RNF168- and RNF8-mediated ubiquitination. In turn, participates in the recruitment of DNA damage repair factors to DNA break sites. Required for proper progression through S phase and subsequent mitotic entry. Acts as a positive regulator of TP53 by deubiquitinating and stabilizing it to promote normal cell proliferation and transformation. Participates in establishing tolerance innate immune memory through non-transcriptional feedback. Mechanistically, negatively regulates TLR-induced NF-kappa-B signaling by targeting and removing the 'Lys-63'-linked polyubiquitin chains on MYD88. Negatively regulates the activation of type I interferon signaling by mediating 'Lys-63'-linked polyubiquitin chains on RIGI and IFIH1. Also deubiquinates ASC/PYCARD, the central adapter mediating the assembly and activation of most inflammasomes, and thereby promotes inflammasome activation. This Mus musculus (Mouse) protein is Ubiquitin carboxyl-terminal hydrolase 3 (Usp3).